We begin with the raw amino-acid sequence, 83 residues long: Hainantoxin-III 9 (83 aa).

Positions 1 to 21 (MKASMFLALAGLALLFVVCYA) are cleaved as a signal peptide. Residues 22 to 48 (SESEEKEFPIELLSKIFAVDVFKGEER) constitute a propeptide that is removed on maturation. 3 disulfides stabilise this stretch: cysteine 50/cysteine 65, cysteine 57/cysteine 70, and cysteine 64/cysteine 77. Leucine 81 is modified (leucine amide).

It belongs to the neurotoxin 10 (Hwtx-1) family. 15 (Hntx-3) subfamily. In terms of assembly, monomer. As to expression, expressed by the venom gland.

The protein localises to the secreted. In terms of biological role, selective antagonist of neuronal tetrodotoxin (TTX)-sensitive voltage-gated sodium channels (IC(50)=1270 nM on Nav1.1/SCN1A, 270 nM on Nav1.2/SCN2A, 491 nM on Nav1.3/SCN3A and 232 nM on Nav1.7/SCN9A). This toxin suppress Nav1.7 current amplitude without significantly altering the activation, inactivation, and repriming kinetics. Short extreme depolarizations partially activate the toxin-bound channel, indicating voltage-dependent inhibition of this toxin. This toxin increases the deactivation of the Nav1.7 current after extreme depolarizations. The toxin-Nav1.7 complex is gradually dissociated upon prolonged strong depolarizations in a voltage-dependent manner, and the unbound toxin rebinds to Nav1.7 after a long repolarization. Moreover, analysis of chimeric channels showed that the DIIS3-S4 linker is critical for toxin binding to Nav1.7. These data are consistent with this toxin interacting with Nav1.7 site 4 and trapping the domain II voltage sensor in the closed state. This is Hainantoxin-III 9 from Cyriopagopus hainanus (Chinese bird spider).